We begin with the raw amino-acid sequence, 641 residues long: ATP-dependent zinc metalloprotease FtsH 2 (641 aa).

The Periplasmic portion of the chain corresponds to 1–100 (MLAYYVSVNQ…IDVKVIHNFW (100 aa)). The helical transmembrane segment at 101–121 (GQAFLSVLPFLLFILALYFLF) threads the bilayer. The Cytoplasmic segment spans residues 122–641 (RQQIRMAGRG…LLPGLEGAPA (520 aa)). Position 193–200 (193–200 (GPPGTGKT)) interacts with ATP. His415 contacts Zn(2+). Glu416 is a catalytic residue. His419 and Asp491 together coordinate Zn(2+). The tract at residues 593-641 (KTGKMTNPPSKNSSPVSNGGEASSTKSPARQEETTKDGGLLPGLEGAPA) is disordered. Low complexity-rich tracts occupy residues 599-610 (NPPSKNSSPVSN) and 630-641 (GGLLPGLEGAPA).

This sequence in the central section; belongs to the AAA ATPase family. The protein in the C-terminal section; belongs to the peptidase M41 family. As to quaternary structure, homohexamer. Requires Zn(2+) as cofactor.

Its subcellular location is the cell inner membrane. Its function is as follows. Acts as a processive, ATP-dependent zinc metallopeptidase for both cytoplasmic and membrane proteins. Plays a role in the quality control of integral membrane proteins. This is ATP-dependent zinc metalloprotease FtsH 2 from Methylacidiphilum infernorum (isolate V4) (Methylokorus infernorum (strain V4)).